The primary structure comprises 429 residues: Lysine-specific demethylase JMJ30 (429 aa).

In terms of domain architecture, JmjC spans 272–429 (SSPMEPTYLA…WSNEAESSSS (158 aa)). Residues His326, Asp328, and His405 each contribute to the Fe cation site.

It belongs to the JARID1 histone demethylase family. As to quaternary structure, interacts with EFM. Binds to ATXR2, ARF7 and ARF19. Fe(2+) is required as a cofactor. Expressed ubiquitously in vasculatures, roots, rosette leaves, stems, inflorescences and siliques. Mainly present in the root meristem and root differentiation area. Observed at high level in callus.

Its subcellular location is the nucleus. The protein localises to the cytoplasm. The protein resides in the endoplasmic reticulum. The enzyme catalyses N(6),N(6),N(6)-trimethyl-L-lysyl(36)-[histone H3] + 2 2-oxoglutarate + 2 O2 = N(6)-methyl-L-lysyl(36)-[histone H3] + 2 formaldehyde + 2 succinate + 2 CO2. It catalyses the reaction N(6),N(6),N(6)-trimethyl-L-lysyl(27)-[histone H3] + 2 2-oxoglutarate + 2 O2 = N(6)-methyl-L-lysyl(27)-[histone H3] + 2 formaldehyde + 2 succinate + 2 CO2. It carries out the reaction N(6),N(6)-dimethyl-L-lysyl(36)-[histone H3] + 2 2-oxoglutarate + 2 O2 = L-lysyl(36)-[histone H3] + 2 formaldehyde + 2 succinate + 2 CO2. Functionally, histone demethylase that demethylates 'Lys-36' (H3K36me) of histone H3 with a specific activity for H3K36me3 and H3K36me2. Also active on 'Lys-27' (H3K27me) of histone H3 with a specific activity for H3K27me3 and H3K27me2. No activity on H3K36me1 and H3K27me1. Involved in the control of flowering time by demethylating H3K36me2 at the FT locus and repressing its expression. Acts within the central clock and contributes, in parallel with LUX, to temperature compensation, probably as a component of the evening complex, to maintain circadian period at increasing temperatures; this mechanism involves binding to and regulation of CCA1 and PRR7 promoters. Works in concert with TOC1 to promote the morning-phased clock genes CCA1 and LHY which function as components of the central oscillator. Together with JMJ32, regulates the flowering-repressor FLOWERING LOCUS C (FLC) locus by removing the repressive histone modification H3 lysine 27 trimethylation (H3K27me3), especially at elevated temperatures (e.g. 29 degrees Celsius), thus preventing extreme precocious flowering. JMJ30 and JMJ32 are regulators involved in the integration of abscisic acid (ABA) and brassinosteroids (BR) signaling pathways. Together with JMJ32, controls ABA-mediated growth arrest during the post-germination stage in unfavorable conditions, and responses to ABA during root development, via the removal of repressive histone mark (H3K27me3) from the SnRK2.8 promoter, thus promoting SnRK2.8 expression and subsequent kinase-dependent ABI3 activation. In addition, removes the repressive histone marks (H3K27me3) from the BZR1 locus in response to stress and ABA, thus activating the BR signaling pathway which, in turn, inhibits the ABA signaling pathway. Able to drive tissue identity changes to promote callus formation form somatic cells via a massive genome-wide chromatin remodeling (e.g. H3K9me3 demethylation) leading to the induction of Lateral organ Boundaries-Domain (LBD) genes (e.g. LBD16 and LBD29) that establish root primordia; when in complex with ARF proteins (e.g. ARF7 and ARF19), recruits ATXR2 which promotes the deposition of H3K36me3 at LBD genes promoters, thus ensuring their stable activation during callus formation. This Arabidopsis thaliana (Mouse-ear cress) protein is Lysine-specific demethylase JMJ30.